Here is a 707-residue protein sequence, read N- to C-terminus: Alpha-hemolysin translocation ATP-binding protein HlyB (707 aa).

The Peptidase C39 domain maps to 2 to 125 (DFHHKNNYGL…DLYQGNIILI (124 aa)). The active site involves H83. Positions 154–436 (FIETLIVSVF…LAQLWQDFQQ (283 aa)) constitute an ABC transmembrane type-1 domain. 5 helical membrane-spanning segments follow: residues 158–178 (LIVSVFLQLFALITPLFFQVV), 191–211 (LNIITIALAVVAIFEITLSGL), 269–289 (ALTSILDLLFSFIFFAVMWYY), 295–315 (LVILFSLPCYATWSIFISPIL), and 387–407 (AVMIINLWLGAHLVISGDLSI). One can recognise an ABC transporter domain in the interval 468–703 (ISFRNIRFRY…PESLYHYLHQ (236 aa)). 502–509 (GRSGSGKS) serves as a coordination point for ATP.

Belongs to the ABC transporter superfamily. Protein-1 exporter (TC 3.A.1.109) family.

It localises to the cell membrane. Its function is as follows. Involved in the export of hemolysin A. The polypeptide is Alpha-hemolysin translocation ATP-binding protein HlyB (hlyB) (Proteus vulgaris).